Consider the following 89-residue polypeptide: Small ribosomal subunit protein uS15 (89 aa).

It belongs to the universal ribosomal protein uS15 family. Part of the 30S ribosomal subunit. Forms a bridge to the 50S subunit in the 70S ribosome, contacting the 23S rRNA.

In terms of biological role, one of the primary rRNA binding proteins, it binds directly to 16S rRNA where it helps nucleate assembly of the platform of the 30S subunit by binding and bridging several RNA helices of the 16S rRNA. Functionally, forms an intersubunit bridge (bridge B4) with the 23S rRNA of the 50S subunit in the ribosome. The sequence is that of Small ribosomal subunit protein uS15 from Zymomonas mobilis subsp. mobilis (strain ATCC 31821 / ZM4 / CP4).